The following is a 229-amino-acid chain: UPF0173 metal-dependent hydrolase Hbut_0886 (229 aa).

It belongs to the UPF0173 family.

The sequence is that of UPF0173 metal-dependent hydrolase Hbut_0886 from Hyperthermus butylicus (strain DSM 5456 / JCM 9403 / PLM1-5).